Consider the following 1342-residue polypeptide: WD repeat-containing protein 19 (1342 aa).

6 WD repeats span residues 11-51 (TWLG…RSEI), 52-92 (NLPG…TSQL), 95-134 (GMRD…KIPV), 137-175 (KHTK…IRQT), 273-311 (NHKD…DMYV), and 317-356 (EENK…LGDA). TPR repeat units follow at residues 736 to 769 (AQDL…AKHL), 775 to 808 (PFIS…DNKE), 840 to 873 (RVLK…DKAA), 895 to 928 (PKIH…QSVI), 951 to 984 (LDGA…NEAF), and 1020 to 1053 (EKRY…EDNV).

Component of the IFT complex A (IFT-A) complex. IFT-A complex is divided into a core subcomplex composed of IFT122:IFT140:WDR19 which is associated with TULP3 and a peripheral subcomplex composed of IFT43:WDR35:TTC21B. Interacts (via C-terminal region) with IFT122 (via C-terminal region). Interacts with BBS1. Interacts with TTC25. As to expression, some isoforms are tissue-specific. Highly expressed in the prostate. Lower expression in the cerebellum, pituitary gland, fetal lung, and pancreas. In normal prostate, expressed in both basal and luminal epithelial cells. No expression detected in fibromuscular stromal cells, endothelial cells, or infiltrating lymphocytes. Uniformed expression in prostate adenocarcinoma cells.

The protein resides in the cell projection. The protein localises to the cilium. Its subcellular location is the cytoplasm. It localises to the cytoskeleton. It is found in the cilium basal body. The protein resides in the photoreceptor outer segment. The protein localises to the flagellum. In terms of biological role, as component of the IFT complex A (IFT-A), a complex required for retrograde ciliary transport and entry into cilia of G protein-coupled receptors (GPCRs), it is involved in cilia function and/or assembly. Essential for functional IFT-A assembly and ciliary entry of GPCRs. Associates with the BBSome complex to mediate ciliary transport. This Homo sapiens (Human) protein is WD repeat-containing protein 19.